Here is a 159-residue protein sequence, read N- to C-terminus: 6,7-dimethyl-8-ribityllumazine synthase (159 aa).

5-amino-6-(D-ribitylamino)uracil is bound by residues Trp28, 59 to 61 (ALE), and 81 to 83 (CVI). 86-87 (GT) is a (2S)-2-hydroxy-3-oxobutyl phosphate binding site. The Proton donor role is filled by His89. Asn114 is a 5-amino-6-(D-ribitylamino)uracil binding site. A (2S)-2-hydroxy-3-oxobutyl phosphate-binding site is contributed by Arg128.

It belongs to the DMRL synthase family.

The enzyme catalyses (2S)-2-hydroxy-3-oxobutyl phosphate + 5-amino-6-(D-ribitylamino)uracil = 6,7-dimethyl-8-(1-D-ribityl)lumazine + phosphate + 2 H2O + H(+). It participates in cofactor biosynthesis; riboflavin biosynthesis; riboflavin from 2-hydroxy-3-oxobutyl phosphate and 5-amino-6-(D-ribitylamino)uracil: step 1/2. In terms of biological role, catalyzes the formation of 6,7-dimethyl-8-ribityllumazine by condensation of 5-amino-6-(D-ribitylamino)uracil with 3,4-dihydroxy-2-butanone 4-phosphate. This is the penultimate step in the biosynthesis of riboflavin. The protein is 6,7-dimethyl-8-ribityllumazine synthase of Corynebacterium kroppenstedtii (strain DSM 44385 / JCM 11950 / CIP 105744 / CCUG 35717).